We begin with the raw amino-acid sequence, 144 residues long: Peptide methionine sulfoxide reductase MsrB (144 aa).

One can recognise a MsrB domain in the interval 5 to 127 (KEEKIKSLNR…NSAALRFIPK (123 aa)). The Nucleophile role is filled by cysteine 116.

This sequence belongs to the MsrB Met sulfoxide reductase family.

It catalyses the reaction L-methionyl-[protein] + [thioredoxin]-disulfide + H2O = L-methionyl-(R)-S-oxide-[protein] + [thioredoxin]-dithiol. This Bacillus velezensis (strain DSM 23117 / BGSC 10A6 / LMG 26770 / FZB42) (Bacillus amyloliquefaciens subsp. plantarum) protein is Peptide methionine sulfoxide reductase MsrB.